Reading from the N-terminus, the 365-residue chain is Homeobox protein knotted-1-like 7 (365 aa).

Residues 1 to 11 (MEELEGHRGEG) are compositionally biased toward basic and acidic residues. Residues 1 to 20 (MEELEGHRGEGRLPPPPPLL) are disordered. The 21-residue stretch at 227-247 (ALKRHLLRKYSGYLGGLRKEL) folds into the ELK domain. The homeobox; TALE-type DNA-binding region spans 248-311 (SKKRKKGKLP…NQRKRHWKPT (64 aa)).

This sequence belongs to the TALE/KNOX homeobox family.

It is found in the nucleus. Functionally, probable transcription factor that may be involved in shoot formation during embryogenesis. This chain is Homeobox protein knotted-1-like 7 (OSH3), found in Oryza sativa subsp. japonica (Rice).